Consider the following 445-residue polypeptide: Acyl-lipid (7-3)-desaturase (445 aa).

The 81-residue stretch at 11-91 (VAELRAAEVA…MSKFFVGSLD (81 aa)) folds into the Cytochrome b5 heme-binding domain. Heme is bound by residues His-50 and His-73. The next 2 membrane-spanning stretches (helical) occupy residues 126–146 (YWLK…YMLL) and 148–168 (GKTL…GLNI). The Histidine box-1 motif lies at 170–174 (HDANH). The Histidine box-2 motif lies at 205–210 (HVVMHH). 3 consecutive transmembrane segments (helical) span residues 247 to 267 (ILPG…LELL), 283 to 303 (LFAP…ALPL), and 312 to 332 (ALCI…FFFI). The short motif at 380–384 (QIEHH) is the Histidine box-3 element.

It belongs to the fatty acid desaturase type 1 family. The cofactor is Fe(2+).

It localises to the membrane. It catalyses the reaction a (7Z,10Z,13Z,16Z,19Z)-docosapentaenoyl-containing glycerolipid + 2 Fe(II)-[cytochrome b5] + O2 + 2 H(+) = a (4Z,7Z,10Z,13Z,16Z,19Z)-docosahexaenoyl-containing glycerolipid + 2 Fe(III)-[cytochrome b5] + 2 H2O. The enzyme catalyses a (7Z,10Z,13Z,16Z)-docosatetraenoyl-containing glycerolipid + 2 Fe(II)-[cytochrome b5] + O2 + 2 H(+) = a (4Z,7Z,10Z,13Z,16Z)-docosapentaenoyl-containing glycerolipid + 2 Fe(III)-[cytochrome b5] + 2 H2O. Functionally, fatty acid desaturase that introduces a cis double bond at the 4-position in 22-carbon polyunsaturated fatty acids that contain a Delta(7) double bond, resulting in the production of delta-4 desaturated fatty acid docosahexanoic acid (DHA). Mediates desaturation of 22:5n-3 and 22:4n-6 into 22:6n-3 and 22:5n-6 respectively. This Diacronema lutheri (Unicellular marine alga) protein is Acyl-lipid (7-3)-desaturase.